The primary structure comprises 203 residues: QQRFPQRYVQLVIVADHRMNTKYNGDSDKIRQWVHQIVNTINEIYRPLNIQFTLVGLEIWSNQDLITVTSVSHDTLASFGNWRETDLLRRQRHDNAQLLTAIDFDGDTVGLAYVGGMCQLKHSTGVIQDHSAINLLVALTMAHELGHNLGMNHDGNQCHCGANSCVMAAMLSDQPSKLFSDCSKKDYQTFLTVNNPQCILNKP.

Gln-1 carries the post-translational modification Pyrrolidone carboxylic acid. The 197-residue stretch at 7 to 203 folds into the Peptidase M12B domain; the sequence is RYVQLVIVAD…NNPQCILNKP (197 aa). Disulfide bonds link Cys-118–Cys-198, Cys-158–Cys-182, and Cys-160–Cys-165. His-143 lines the Zn(2+) pocket. Residue Glu-144 is part of the active site. Zn(2+)-binding residues include His-147 and His-153.

The protein belongs to the venom metalloproteinase (M12B) family. P-I subfamily. As to quaternary structure, monomer. It depends on Zn(2+) as a cofactor. In terms of tissue distribution, expressed by the venom gland.

Its subcellular location is the secreted. The enzyme catalyses Hydrolysis of 14-Ala-|-Leu-15 in insulin B chain and 413-Lys-|-Leu-414 in alpha-chain of fibrinogen.. Is inhibited by EDTA, o-phenanthroline and tetraethylenepentamine. Snake venom zinc metalloprotease that exhibits direct fibrinolytic activity. In Agkistrodon contortrix contortrix (Southern copperhead), this protein is Snake venom metalloproteinase fibrolase.